The following is a 263-amino-acid chain: Methylesterase 1 (263 aa).

The Acyl-ester intermediate role is filled by serine 85. Active-site charge relay system residues include aspartate 213 and histidine 241.

The protein belongs to the AB hydrolase superfamily. Methylesterase family.

The enzyme catalyses methyl (indol-3-yl)acetate + H2O = (indol-3-yl)acetate + methanol + H(+). The catalysed reaction is methyl (-)-jasmonate + H2O = jasmonate + methanol + H(+). It catalyses the reaction methyl salicylate + H2O = salicylate + methanol + H(+). The protein operates within plant hormone biosynthesis. Its pathway is lipid metabolism; oxylipin biosynthesis. With respect to regulation, esterase activity is down-regulated by salicylic acid (SA). Its function is as follows. Methylesterase shown to have carboxylesterase activity, methyl indole-3-acetic acid (MeIAA) esterase activity, methyl salicylate (MeSA) esterase activity and methyl jasmonate (MeJA) esterase activity in vitro. Required to convert methyl salicylate (MeSA) to salicylic acid (SA) as part of the signal transduction pathways that activate systemic acquired resistance in systemic tissue. MeSA is believed to be an inactive form that needs to be demethylated to exert a biological effect. In Arabidopsis thaliana (Mouse-ear cress), this protein is Methylesterase 1.